The following is a 301-amino-acid chain: Porin (301 aa).

As to quaternary structure, homotrimer.

The protein resides in the cell outer membrane. In terms of biological role, forms channels that allow the passive diffusion of small hydrophilic solutes up to an exclusion limit of about 0.6 kDa. This Rhodobacter capsulatus (Rhodopseudomonas capsulata) protein is Porin.